The sequence spans 668 residues: Probable syringafactin export ATP-binding/permease protein SyfD (668 aa).

The 239-residue stretch at 22-260 (LRLQQVSRSF…APEAQPATPP (239 aa)) folds into the ABC transporter domain. An ATP-binding site is contributed by 58 to 65 (GASGSGKS). The tract at residues 242–263 (RRTAQTTQPAPEAQPATPPGPA) is disordered. Residues 245-256 (AQTTQPAPEAQP) are compositionally biased toward low complexity. 5 helical membrane passes run 267 to 287 (LLAS…ALIS), 293 to 313 (LLTM…SAIG), 541 to 561 (LTLL…IGVM), 602 to 622 (MGGV…TLFV), and 631 to 651 (LASV…FGFV).

Belongs to the ABC transporter superfamily. Macrolide exporter (TC 3.A.1.122) family. Probably part of a tripartite efflux system, which is composed of an inner membrane transporter, a periplasmic membrane fusion protein, and an outer membrane component.

The protein resides in the cell inner membrane. In terms of biological role, probably involved in the export of syringafactins. In Pseudomonas syringae pv. tomato (strain ATCC BAA-871 / DC3000), this protein is Probable syringafactin export ATP-binding/permease protein SyfD.